The following is a 205-amino-acid chain: High frequency lysogenization protein HflD homolog (205 aa).

This sequence belongs to the HflD family.

Its subcellular location is the cytoplasm. It localises to the cell inner membrane. The sequence is that of High frequency lysogenization protein HflD homolog from Vibrio parahaemolyticus serotype O3:K6 (strain RIMD 2210633).